A 128-amino-acid chain; its full sequence is MHHIELYVSDLEASRRFWGWFLKELGYKEYQKWSSGISWKKDRFYLVIVQAKEPFLEPEYHRCRVGLNHLAFHAESKLQVDQMTEKLTAKGYRVLYRDRHPFAGGDGHYAVFCEDPDRIKVELVAPSC.

The region spanning 1–126 (MHHIELYVSD…DRIKVELVAP (126 aa)) is the VOC domain.

This is an uncharacterized protein from Bacillus subtilis (strain 168).